We begin with the raw amino-acid sequence, 254 residues long: Low affinity immunoglobulin gamma Fc region receptor III-A (254 aa).

A signal peptide spans 1 to 20 (MWQLLLPTALLLLVSAGMRA). At 21 to 206 (EDLPKAVVFL…SSISSFFPPG (186 aa)) the chain is on the extracellular side. 2 Ig-like C2-type domains span residues 24-105 (PKAV…LEVH) and 107-189 (GWLL…VNIT). 2 disulfides stabilise this stretch: Cys47–Cys89 and Cys128–Cys172. N-linked (GlcNAc...) asparagine glycosylation is present at Asn187. A helical membrane pass occupies residues 207–229 (YQVSFCLVMVLLFAVDTGLYFSV). Over 230 to 254 (KKSVPSSTRDWEDHKFKWSKDPQDK) the chain is Cytoplasmic.

As to quaternary structure, forms a heterooligomeric complex with ITAM-containing signaling subunits, either a homodimer of CD247, a homodimer of FCER1G or a heterodimer of CD247 and FCER1G, to form a functional receptor complex. Interacts (via transmembrane domain) with signaling subunits; this interaction is a prerequisite for receptor complex expression on the cell surface and intracellular signal transduction. Binds the Fc region of antigen-complexed IgG with a preference for IgG1 and IgG3 isotypes. Interacts with CD2; this interaction is involved in NK cell activation and cytotoxicity. Interacts with S100A4; this interaction inhibits PKC-dependent phosphorylation of FCGR3A. Glycosylated. Glycosylation plays an inhibitory role in the interaction with IgG1 and IgG2. In terms of processing, undergoes rapid ectodomain shedding upon NK cell stimulation. The soluble form is produced by a proteolytic cleavage mediated by ADAM17. Repeated stimulation causes receptor shedding, a mechanism that allows for increased NK cell motility and detachment from opsonized target cells while avoiding activation-induced NK cell apoptosis. As to expression, lymphocytes and monocytes.

It is found in the cell membrane. Its subcellular location is the secreted. In terms of biological role, receptor for the invariable Fc fragment of immunoglobulin gamma (IgG). Optimally activated upon binding of clustered antigen-IgG complexes displayed on cell surfaces, triggers lysis of antibody-coated cells, a process known as antibody-dependent cellular cytotoxicity (ADCC). Does not bind free monomeric IgG, thus avoiding inappropriate effector cell activation in the absence of antigenic trigger. Mediates IgG effector functions on natural killer (NK) cells. Binds antigen-IgG complexes generated upon infection and triggers NK cell-dependent cytokine production and degranulation to limit viral load and propagation. Involved in the generation of memory-like adaptive NK cells capable to produce high amounts of IFNG and to efficiently eliminate virus-infected cells via ADCC. Regulates NK cell survival and proliferation, in particular by preventing NK cell progenitor apoptosis. Fc-binding subunit that associates with CD247 and/or FCER1G adapters to form functional signaling complexes. Following the engagement of antigen-IgG complexes, triggers phosphorylation of immunoreceptor tyrosine-based activation motif (ITAM)-containing adapters with subsequent activation of phosphatidylinositol 3-kinase signaling and sustained elevation of intracellular calcium that ultimately drive NK cell activation. The ITAM-dependent signaling coupled to receptor phosphorylation by PKC mediates robust intracellular calcium flux that leads to production of pro-inflammatory cytokines, whereas in the absence of receptor phosphorylation it mainly activates phosphatidylinositol 3-kinase signaling leading to cell degranulation. Costimulates NK cells and trigger lysis of target cells independently of IgG binding. Mediates the antitumor activities of therapeutic antibodies. Upon ligation on monocytes triggers TNFA-dependent ADCC of IgG-coated tumor cells. Mediates enhanced ADCC in response to afucosylated IgGs. The sequence is that of Low affinity immunoglobulin gamma Fc region receptor III-A from Macaca mulatta (Rhesus macaque).